The primary structure comprises 535 residues: Estrogen receptor (535 aa).

The interval 1–21 (SRMLTDPPRIGSMQSLGSSPT) is disordered. Positions 1 to 104 (SRMLTDPPRI…VFEMANETRY (104 aa)) are modulating. Residues 12–21 (SMQSLGSSPT) show a composition bias toward polar residues. 2 consecutive NR C4-type zinc fingers follow at residues 105–125 (CAVC…CEGC) and 141–165 (CPAT…LRKC). The nuclear receptor DNA-binding region spans 105–170 (CAVCSDFASG…RLRKCYEVGM (66 aa)). Residues 171-236 (VKGGLRKDRG…GGWCGPRITM (66 aa)) form a hinge region. The segment at 187-229 (DKRYCGPAGDREKPYGDLEHRTAPPQDGGRNSSSSSLSGGGGW) is disordered. Residues 195–208 (GDREKPYGDLEHRT) show a composition bias toward basic and acidic residues. Low complexity predominate over residues 214-223 (GGRNSSSSSL). An NR LBD domain is found at 237–473 (PPEQVLFLLQ…DLLLEMLDGH (237 aa)). The segment at 478–535 (PGKVAQAGEQTEGPSTTTTTSTGSSIGPMRGSQDTHIRSPGSGVLQYGSPSSDQMPIP) is disordered. The segment covering 492 to 502 (STTTTTSTGSS) has biased composition (low complexity). Residues 525-535 (GSPSSDQMPIP) are compositionally biased toward polar residues.

Belongs to the nuclear hormone receptor family. NR3 subfamily. In terms of assembly, binds DNA as a homodimer. Can form a heterodimer with ER-beta. As to expression, highest expression in brain and liver.

It localises to the nucleus. In terms of biological role, the steroid hormones and their receptors are involved in the regulation of eukaryotic gene expression and affect cellular proliferation and differentiation in target tissues. The sequence is that of Estrogen receptor (esr1) from Salmo salar (Atlantic salmon).